Here is a 30-residue protein sequence, read N- to C-terminus: Methanobactin mb-OB3b (30 aa).

Residues 1–19 (MTVKIAQKKVLPVIGRAAA) constitute a propeptide that is removed on maturation. The segment at residues 20–21 (LC) is a cross-link (2-(3-methylbutanoyl)-5-hydroxyoxazole-4-carbothionic acid (Leu-Cys)). Cysteine 21 and cysteine 27 together coordinate Cu(2+). A disulfide bridge connects residues cysteine 24 and cysteine 29. A cross-link (proline 5-hydroxy-oxazole-4-carbothionic acid (Pro-Cys)) is located at residues 26–27 (PC).

In terms of assembly, monomer. In the absence of copper, may exist as a dimer or an oligomer.

It localises to the secreted. The protein localises to the cytoplasm. The enzyme catalyses 2 superoxide + 2 H(+) = H2O2 + O2. In terms of biological role, chalkophore involved in scavenging, uptake and suppression of toxicity of copper. Each apo-methanobactin (apo-mb) complexes 1 Cu(2+) or Cu(1+) ion to form Cu(1+)-mb (Cu-mb) which is then taken up by the cell. Enhances growth rate in the presence of copper and reduces growth lag upon exposition to elevated levels of copper. Cu-mb contributes to the switchover from soluble methane monooxygenase (sMMO) to the membrane-bound particulate MMO (pMMO) by inducing transcription of pMMO subunit A. It also stimulates the enzymatic activity of pMMO. In the absence of copper, binds other metal ions, like Zn(2+), Ag(1+), Au(3+), Co(2+), Cd(2+), Fe(3+), Hg(2+), Mn(2+), Ni(2+), Pb(2+) or U(6+), but not Ba(2+), Ca(2+), La(2+), Mg(2+) or Sr(2+). Uptake is an active process, which may involve TonB-dependent transporters, and as such does not involve porins. Cu-Mb can be taken up by other methanotrophic bacteria but not by E.coli. Has Cu-dependent superoxide dismutase-like activity. Shows reductant-dependent oxidase and hydrogen peroxide reductase activities. Reduces copper-levels in liver in a rat model of Wilson disease. In Methylosinus trichosporium, this protein is Methanobactin mb-OB3b.